The following is a 196-amino-acid chain: Imidazoleglycerol-phosphate dehydratase (196 aa).

This sequence belongs to the imidazoleglycerol-phosphate dehydratase family.

Its subcellular location is the cytoplasm. The enzyme catalyses D-erythro-1-(imidazol-4-yl)glycerol 3-phosphate = 3-(imidazol-4-yl)-2-oxopropyl phosphate + H2O. The protein operates within amino-acid biosynthesis; L-histidine biosynthesis; L-histidine from 5-phospho-alpha-D-ribose 1-diphosphate: step 6/9. The chain is Imidazoleglycerol-phosphate dehydratase from Moorella thermoacetica (strain ATCC 39073 / JCM 9320).